The sequence spans 82 residues: Putative membrane protein insertion efficiency factor (82 aa).

Belongs to the UPF0161 family.

The protein localises to the cell inner membrane. Its function is as follows. Could be involved in insertion of integral membrane proteins into the membrane. This Rickettsia massiliae (strain Mtu5) protein is Putative membrane protein insertion efficiency factor.